Here is a 455-residue protein sequence, read N- to C-terminus: Bifunctional protein GlmU (455 aa).

Residues 1–232 (MASTTGALIL…DPNLLGVNNP (232 aa)) form a pyrophosphorylase region. Residues 10–13 (LAAG), lysine 24, glutamine 75, and 80–81 (GT) each bind UDP-N-acetyl-alpha-D-glucosamine. Aspartate 106 is a binding site for Mg(2+). The UDP-N-acetyl-alpha-D-glucosamine site is built by glycine 141, glutamate 155, asparagine 172, and asparagine 230. Asparagine 230 serves as a coordination point for Mg(2+). The segment at 233-253 (AELIRSEALLRTRLVIGHIEG) is linker. The segment at 254–455 (GVLIHAPETV…QTNLPRKPKA (202 aa)) is N-acetyltransferase. Residues arginine 336 and lysine 354 each contribute to the UDP-N-acetyl-alpha-D-glucosamine site. The active-site Proton acceptor is the histidine 366. UDP-N-acetyl-alpha-D-glucosamine contacts are provided by tyrosine 369 and asparagine 380. Acetyl-CoA contacts are provided by residues alanine 383, 389-390 (NY), serine 408, alanine 426, and arginine 443.

It in the N-terminal section; belongs to the N-acetylglucosamine-1-phosphate uridyltransferase family. The protein in the C-terminal section; belongs to the transferase hexapeptide repeat family. In terms of assembly, homotrimer. It depends on Mg(2+) as a cofactor.

It localises to the cytoplasm. The catalysed reaction is alpha-D-glucosamine 1-phosphate + acetyl-CoA = N-acetyl-alpha-D-glucosamine 1-phosphate + CoA + H(+). It carries out the reaction N-acetyl-alpha-D-glucosamine 1-phosphate + UTP + H(+) = UDP-N-acetyl-alpha-D-glucosamine + diphosphate. It participates in nucleotide-sugar biosynthesis; UDP-N-acetyl-alpha-D-glucosamine biosynthesis; N-acetyl-alpha-D-glucosamine 1-phosphate from alpha-D-glucosamine 6-phosphate (route II): step 2/2. Its pathway is nucleotide-sugar biosynthesis; UDP-N-acetyl-alpha-D-glucosamine biosynthesis; UDP-N-acetyl-alpha-D-glucosamine from N-acetyl-alpha-D-glucosamine 1-phosphate: step 1/1. The protein operates within bacterial outer membrane biogenesis; LPS lipid A biosynthesis. Catalyzes the last two sequential reactions in the de novo biosynthetic pathway for UDP-N-acetylglucosamine (UDP-GlcNAc). The C-terminal domain catalyzes the transfer of acetyl group from acetyl coenzyme A to glucosamine-1-phosphate (GlcN-1-P) to produce N-acetylglucosamine-1-phosphate (GlcNAc-1-P), which is converted into UDP-GlcNAc by the transfer of uridine 5-monophosphate (from uridine 5-triphosphate), a reaction catalyzed by the N-terminal domain. In Nitratidesulfovibrio vulgaris (strain DP4) (Desulfovibrio vulgaris), this protein is Bifunctional protein GlmU.